The chain runs to 387 residues: Ferrochelatase (387 aa).

Residues histidine 196 and glutamate 277 each contribute to the Fe cation site.

This sequence belongs to the ferrochelatase family.

Its subcellular location is the cytoplasm. The enzyme catalyses heme b + 2 H(+) = protoporphyrin IX + Fe(2+). Its pathway is porphyrin-containing compound metabolism; protoheme biosynthesis; protoheme from protoporphyrin-IX: step 1/1. Its function is as follows. Catalyzes the ferrous insertion into protoporphyrin IX. The chain is Ferrochelatase from Synechococcus sp. (strain RCC307).